Consider the following 324-residue polypeptide: Formimidoylglutamase (324 aa).

Mn(2+) contacts are provided by His-124, Asp-153, His-155, Asp-157, Asp-245, and Asp-247.

This sequence belongs to the arginase family. Requires Mn(2+) as cofactor.

It carries out the reaction N-formimidoyl-L-glutamate + H2O = formamide + L-glutamate. It participates in amino-acid degradation; L-histidine degradation into L-glutamate; L-glutamate from N-formimidoyl-L-glutamate (hydrolase route): step 1/1. Functionally, catalyzes the conversion of N-formimidoyl-L-glutamate to L-glutamate and formamide. The polypeptide is Formimidoylglutamase (Hahella chejuensis (strain KCTC 2396)).